The following is a 424-amino-acid chain: O-seryl-dTMP PLP-dependent decarboxylase (424 aa).

Belongs to the pyridoxal-phosphate-dependent aminodecarboxylase family.

It catalyses the reaction 5-O-(L-seryl)-dTMP in DNA + H(+) = 5-aminoethoxy-methyl-dUMP in DNA + CO2. In terms of biological role, converts 5-O-serinylthymidine (O-SerT) into 5-aminoethoxy-2'-deoxymethyluridine (5-NeOmdU) as a step in the pathway leading to thymidine hypermodifications in the viral genome. As a final result of the pathway of hypermodification, 5-NeOmdU substitutes for about 40% of the thymidines in the viral DNA. These modifications probably prevent degradation of viral genome by the host restriction-modification antiviral defense system. The polypeptide is O-seryl-dTMP PLP-dependent decarboxylase (Salmonella phage ViI).